Reading from the N-terminus, the 946-residue chain is Probable outer membrane protein pmp18 (946 aa).

The first 16 residues, 1-16 (MQNNRSLSKSSFFVGA), serve as a signal peptide directing secretion. An Autotransporter domain is found at 668 to 946 (QGQIAPTASG…YLHAGTTFKF (279 aa)).

It belongs to the PMP outer membrane protein family.

The protein resides in the secreted. It is found in the cell wall. The protein localises to the cell outer membrane. This chain is Probable outer membrane protein pmp18 (pmp18), found in Chlamydia pneumoniae (Chlamydophila pneumoniae).